The chain runs to 266 residues: Hydroxyethylthiazole kinase (266 aa).

Methionine 43 serves as a coordination point for substrate. Residues arginine 119 and threonine 166 each contribute to the ATP site. Glycine 193 provides a ligand contact to substrate.

This sequence belongs to the Thz kinase family. Mg(2+) serves as cofactor.

The enzyme catalyses 5-(2-hydroxyethyl)-4-methylthiazole + ATP = 4-methyl-5-(2-phosphooxyethyl)-thiazole + ADP + H(+). It participates in cofactor biosynthesis; thiamine diphosphate biosynthesis; 4-methyl-5-(2-phosphoethyl)-thiazole from 5-(2-hydroxyethyl)-4-methylthiazole: step 1/1. In terms of biological role, catalyzes the phosphorylation of the hydroxyl group of 4-methyl-5-beta-hydroxyethylthiazole (THZ). The sequence is that of Hydroxyethylthiazole kinase from Methanococcus vannielii (strain ATCC 35089 / DSM 1224 / JCM 13029 / OCM 148 / SB).